A 608-amino-acid polypeptide reads, in one-letter code: Aspartate--tRNA(Asp/Asn) ligase (608 aa).

Glutamate 179 provides a ligand contact to L-aspartate. The interval 203–206 (QLFK) is aspartate. Residue arginine 225 participates in L-aspartate binding. ATP contacts are provided by residues 225–227 (RDE) and glutamine 234. Histidine 461 is an L-aspartate binding site. Glutamate 494 serves as a coordination point for ATP. Position 501 (arginine 501) interacts with L-aspartate. 546 to 549 (GLDR) is an ATP binding site.

It belongs to the class-II aminoacyl-tRNA synthetase family. Type 1 subfamily. As to quaternary structure, homodimer.

The protein localises to the cytoplasm. It catalyses the reaction tRNA(Asx) + L-aspartate + ATP = L-aspartyl-tRNA(Asx) + AMP + diphosphate. Its function is as follows. Aspartyl-tRNA synthetase with relaxed tRNA specificity since it is able to aspartylate not only its cognate tRNA(Asp) but also tRNA(Asn). Reaction proceeds in two steps: L-aspartate is first activated by ATP to form Asp-AMP and then transferred to the acceptor end of tRNA(Asp/Asn). The chain is Aspartate--tRNA(Asp/Asn) ligase from Psychrobacter arcticus (strain DSM 17307 / VKM B-2377 / 273-4).